The chain runs to 105 residues: Pyrimidine/purine nucleoside phosphorylase (105 aa).

Belongs to the nucleoside phosphorylase PpnP family.

The catalysed reaction is a purine D-ribonucleoside + phosphate = a purine nucleobase + alpha-D-ribose 1-phosphate. It catalyses the reaction adenosine + phosphate = alpha-D-ribose 1-phosphate + adenine. It carries out the reaction cytidine + phosphate = cytosine + alpha-D-ribose 1-phosphate. The enzyme catalyses guanosine + phosphate = alpha-D-ribose 1-phosphate + guanine. The catalysed reaction is inosine + phosphate = alpha-D-ribose 1-phosphate + hypoxanthine. It catalyses the reaction thymidine + phosphate = 2-deoxy-alpha-D-ribose 1-phosphate + thymine. It carries out the reaction uridine + phosphate = alpha-D-ribose 1-phosphate + uracil. The enzyme catalyses xanthosine + phosphate = alpha-D-ribose 1-phosphate + xanthine. In terms of biological role, catalyzes the phosphorolysis of diverse nucleosides, yielding D-ribose 1-phosphate and the respective free bases. Can use uridine, adenosine, guanosine, cytidine, thymidine, inosine and xanthosine as substrates. Also catalyzes the reverse reactions. This is Pyrimidine/purine nucleoside phosphorylase from Cupriavidus necator (strain ATCC 17699 / DSM 428 / KCTC 22496 / NCIMB 10442 / H16 / Stanier 337) (Ralstonia eutropha).